The chain runs to 251 residues: Urease accessory protein UreF (251 aa).

Positions 1–20 are disordered; sequence MAPAPDPAPAGSAAPDPASA. The segment covering 9 to 20 has biased composition (low complexity); sequence PAGSAAPDPASA.

The protein belongs to the UreF family. As to quaternary structure, ureD, UreF and UreG form a complex that acts as a GTP-hydrolysis-dependent molecular chaperone, activating the urease apoprotein by helping to assemble the nickel containing metallocenter of UreC. The UreE protein probably delivers the nickel.

It localises to the cytoplasm. Required for maturation of urease via the functional incorporation of the urease nickel metallocenter. In Paracidovorax citrulli (strain AAC00-1) (Acidovorax citrulli), this protein is Urease accessory protein UreF.